Reading from the N-terminus, the 184-residue chain is uncharacterized protein (184 aa).

It to M.tuberculosis Rv0487.

This is an uncharacterized protein from Mycobacterium leprae (strain TN).